The following is a 55-amino-acid chain: Small integral membrane protein 11 (55 aa).

The helical transmembrane segment at 9 to 29 threads the bilayer; sequence VPLLLYILAAKTLILCLAFAG. Residues 34–54 adopt a coiled-coil conformation; sequence QRRSLEGKLQAEKRKQSEKKA.

As to expression, expressed in brain, heart, kidney, thymus, liver, stomach, muscle, lung, testis, ovary, skin and eye.

It localises to the membrane. This Mus musculus (Mouse) protein is Small integral membrane protein 11.